We begin with the raw amino-acid sequence, 437 residues long: UBX domain-containing protein 6 (437 aa).

2 disordered regions span residues 1-45 and 89-109; these read MNSF…AQGG and ERRQ…QPDR. Basic residues predominate over residues 7–18; the sequence is FLNKKRVQNHFK. Positions 179–251 constitute a PUB domain; it reads ETAIETICKY…VFTKPSDVHL (73 aa). Positions 332-409 constitute a UBX domain; the sequence is YRYKYTLIRV…SLAPAALLHV (78 aa).

In terms of assembly, interacts with cdc-48.1 (via N-terminus) and cdc-48.2 (via N-terminus). As to expression, expressed in the pharynx and some head neurons.

Functionally, probably acts as an adapter for ATPase cdc-48.1 and/or cdc-48.2, conferring substrate specificity. Involved in the lysosomal clearance of cellular material in diet restricted conditions. This is UBX domain-containing protein 6 from Caenorhabditis elegans.